We begin with the raw amino-acid sequence, 367 residues long: Leucine-rich repeat-containing protein 28 (367 aa).

LRR repeat units follow at residues 16 to 36 (KHKN…ELLK), 42 to 63 (YLER…LAQK), 66 to 87 (NLVE…IGSL), 89 to 111 (KLQS…GRLK), 112 to 133 (SLRH…IGKL), 135 to 156 (ELQT…LYQC), 158 to 179 (SLQY…LCQL), 181 to 202 (SLNE…LGRS), and 204 to 226 (ELQY…LYNK).

The polypeptide is Leucine-rich repeat-containing protein 28 (lrrc28) (Xenopus tropicalis (Western clawed frog)).